The chain runs to 218 residues: Thiopurine S-methyltransferase (218 aa).

4 residues coordinate S-adenosyl-L-methionine: Trp10, Leu45, Glu66, and Arg123.

This sequence belongs to the class I-like SAM-binding methyltransferase superfamily. TPMT family.

The protein localises to the cytoplasm. It carries out the reaction S-adenosyl-L-methionine + a thiopurine = S-adenosyl-L-homocysteine + a thiopurine S-methylether.. This is Thiopurine S-methyltransferase from Shewanella baltica (strain OS223).